The sequence spans 358 residues: Phosphoserine aminotransferase (358 aa).

Arg43 is an L-glutamate binding site. Positions 103, 153, 172, and 195 each coordinate pyridoxal 5'-phosphate. At Lys196 the chain carries N6-(pyridoxal phosphate)lysine. 236-237 (NT) serves as a coordination point for pyridoxal 5'-phosphate.

This sequence belongs to the class-V pyridoxal-phosphate-dependent aminotransferase family. SerC subfamily. In terms of assembly, homodimer. It depends on pyridoxal 5'-phosphate as a cofactor.

Its subcellular location is the cytoplasm. It carries out the reaction O-phospho-L-serine + 2-oxoglutarate = 3-phosphooxypyruvate + L-glutamate. It catalyses the reaction 4-(phosphooxy)-L-threonine + 2-oxoglutarate = (R)-3-hydroxy-2-oxo-4-phosphooxybutanoate + L-glutamate. Its pathway is amino-acid biosynthesis; L-serine biosynthesis; L-serine from 3-phospho-D-glycerate: step 2/3. It participates in cofactor biosynthesis; pyridoxine 5'-phosphate biosynthesis; pyridoxine 5'-phosphate from D-erythrose 4-phosphate: step 3/5. Its function is as follows. Catalyzes the reversible conversion of 3-phosphohydroxypyruvate to phosphoserine and of 3-hydroxy-2-oxo-4-phosphonooxybutanoate to phosphohydroxythreonine. In Dichelobacter nodosus (strain VCS1703A), this protein is Phosphoserine aminotransferase.